The primary structure comprises 489 residues: MNVQNEKSMTVRGKDRYKSGVMSYKKMGYWEPDYTPKDTDVICLFRVTPQDGVDPIEASAAVAGESSTATWTVVWTDRLTAAEKYRAKCYRVDPVPGAEGQYFAYIAYDLDLFEPGSISNLTASVIGNVFGFKPLKALRLEDMRLPVAYVKTFKGPPTGIVVERERLDKFGRPLLGATVKPKLGLSGRNYGRVVYEALKGGLDFTKDDENINSQPFMHWRERFLYCMEAVNRAQAATGEIKGSYLNVTAATMEDMYERAEFAKELGSVVVMIDLVIGYTAIQSMSNWARKNDMILHLHRAGHSTYTRQRSHGVSFRVISKWMRLAGVDHIHAGTVVGKLEGDPLTTRGFYDICREEYNPTQLEHGIFFDQNWASLNKVMPVASGGIHAGQMHQLIQHLGEDVVLQFGGGTIGHPMGIQAGATANRVALEAMILARNEGRDYVSEGPEILAKAAASCTPLKQALEVWKDVTFDYASTDAPDYVPTAVPAA.

The substrate site is built by Asn128 and Thr178. The active-site Proton acceptor is Lys180. Substrate is bound at residue Lys182. Residues Lys206, Asp208, and Glu209 each contribute to the Mg(2+) site. Lys206 is modified (N6-carboxylysine). The Proton acceptor role is filled by His298. Substrate-binding residues include Arg299, His331, and Ser383.

The protein belongs to the RuBisCO large chain family. Type I subfamily. As to quaternary structure, heterohexadecamer of 8 large chains and 8 small chains. Requires Mg(2+) as cofactor.

The catalysed reaction is 2 (2R)-3-phosphoglycerate + 2 H(+) = D-ribulose 1,5-bisphosphate + CO2 + H2O. The enzyme catalyses D-ribulose 1,5-bisphosphate + O2 = 2-phosphoglycolate + (2R)-3-phosphoglycerate + 2 H(+). Its function is as follows. RuBisCO catalyzes two reactions: the carboxylation of D-ribulose 1,5-bisphosphate, the primary event in carbon dioxide fixation, as well as the oxidative fragmentation of the pentose substrate. Both reactions occur simultaneously and in competition at the same active site. This chain is Ribulose bisphosphate carboxylase large chain 2, found in Nitrobacter winogradskyi (strain ATCC 25391 / DSM 10237 / CIP 104748 / NCIMB 11846 / Nb-255).